Consider the following 148-residue polypeptide: MKLDLKILDARMRDYLPKYATTGSAGLDLRACLDAPVTLKPGDTALVPTGLAIHLADPGYAALILPRSGLGHKHGIVLGNLVGLIDSDYQGELMISTWNRGQTEFALNPFERLAQLVIVPVVQARFNLVDDFAQSERGAGGFGSTGRG.

Substrate contacts are provided by residues 67–69 (RSG), N80, 84–86 (LID), and M94.

Belongs to the dUTPase family. The cofactor is Mg(2+).

It catalyses the reaction dUTP + H2O = dUMP + diphosphate + H(+). It functions in the pathway pyrimidine metabolism; dUMP biosynthesis; dUMP from dCTP (dUTP route): step 2/2. Functionally, this enzyme is involved in nucleotide metabolism: it produces dUMP, the immediate precursor of thymidine nucleotides and it decreases the intracellular concentration of dUTP so that uracil cannot be incorporated into DNA. The sequence is that of Deoxyuridine 5'-triphosphate nucleotidohydrolase from Burkholderia mallei (strain NCTC 10247).